The sequence spans 680 residues: DNA-directed RNA polymerase subunit beta' (680 aa).

Positions 69, 71, 87, and 90 each coordinate Zn(2+). Mg(2+) is bound by residues Asp-489, Asp-491, and Asp-493.

This sequence belongs to the RNA polymerase beta' chain family. RpoC1 subfamily. In plastids the minimal PEP RNA polymerase catalytic core is composed of four subunits: alpha, beta, beta', and beta''. When a (nuclear-encoded) sigma factor is associated with the core the holoenzyme is formed, which can initiate transcription. Mg(2+) serves as cofactor. The cofactor is Zn(2+).

The protein localises to the plastid. It localises to the chloroplast. It carries out the reaction RNA(n) + a ribonucleoside 5'-triphosphate = RNA(n+1) + diphosphate. DNA-dependent RNA polymerase catalyzes the transcription of DNA into RNA using the four ribonucleoside triphosphates as substrates. The sequence is that of DNA-directed RNA polymerase subunit beta' from Capsella bursa-pastoris (Shepherd's purse).